Reading from the N-terminus, the 396-residue chain is Immunoglobulin heavy constant gamma 4 (396 aa).

The CH1 stretch occupies residues 1–98 (ASTKGPSVFP…PSNTKVDKRV (98 aa)). Residues 1-347 (ASTKGPSVFP…DGELDGLWTT (347 aa)) are Extracellular-facing. 3 Ig-like domains span residues 6-99 (PSVF…KRVE), 118-217 (PSVF…KTIS), and 226-322 (PQVY…KSLS). Residues Cys27 and Cys83 are joined by a disulfide bond. Residues 99 to 110 (ESKYGPPCPSCP) are hinge. The segment at 111-220 (APEFLGGPSV…SIEKTISKAK (110 aa)) is CH2. Cystine bridges form between Cys141–Cys201 and Cys247–Cys305. A glycan (N-linked (GlcNAc...) (complex) asparagine) is linked at Asn177. The CH3 stretch occupies residues 221–327 (GQPREPQVYT…QKSLSLSLEL (107 aa)). Residues 348–368 (ITIFITLFLLSVCYSATVTFF) traverse the membrane as a helical segment. Topologically, residues 369–396 (KVKWIFSSVVDLKQTIVPDYRNMIRQGA) are cytoplasmic.

Immunoglobulins are composed of two identical heavy chains and two identical light chains; disulfide-linked. Post-translationally, glycosylation on Asn-177 is required for interaction with Fc receptors and ability to activate the complement pathway. In terms of processing, (Microbial infection) Deglycosylation on Asn-177 by S.pyogenes EndoS or Endos2 endoglucosidases prevents interaction between immunoglobulin-gamma (IgG) and Fc receptors, impairing ability to activate the complement pathway.

It localises to the secreted. It is found in the cell membrane. Constant region of immunoglobulin heavy chains. Immunoglobulins, also known as antibodies, are membrane-bound or secreted glycoproteins produced by B lymphocytes. In the recognition phase of humoral immunity, the membrane-bound immunoglobulins serve as receptors which, upon binding of a specific antigen, trigger the clonal expansion and differentiation of B lymphocytes into immunoglobulins-secreting plasma cells. Secreted immunoglobulins mediate the effector phase of humoral immunity, which results in the elimination of bound antigens. The antigen binding site is formed by the variable domain of one heavy chain, together with that of its associated light chain. Thus, each immunoglobulin has two antigen binding sites with remarkable affinity for a particular antigen. The variable domains are assembled by a process called V-(D)-J rearrangement and can then be subjected to somatic hypermutations which, after exposure to antigen and selection, allow affinity maturation for a particular antigen. The chain is Immunoglobulin heavy constant gamma 4 from Homo sapiens (Human).